A 319-amino-acid polypeptide reads, in one-letter code: G-protein coupled receptor 55 (319 aa).

Topologically, residues 1 to 21 (MSQQNTSGDCLFDGVNELMKT) are extracellular. Asn-5 carries N-linked (GlcNAc...) asparagine glycosylation. Residues 22–42 (LQFAVHIPTFVLGLLLNLLAI) traverse the membrane as a helical segment. Topologically, residues 43-58 (HGFSTFLKNRWPDYAA) are cytoplasmic. A helical transmembrane segment spans residues 59 to 79 (TSIYMINLAVFDLLLVLSLPF). The Extracellular segment spans residues 80–94 (KMVLSQVQSPFPSLC). Residues 95–115 (TLVECLYFVSMYGSVFTICFI) form a helical membrane-spanning segment. Topologically, residues 116–137 (SMDRFLAIRYPLLVSHLRSPRK) are cytoplasmic. Residues 138–158 (IFGICCTIWVLVWTGSIPIYS) form a helical membrane-spanning segment. Residues 159–180 (FHGKVEKYMCFHNMSDDTWSAK) lie on the Extracellular side of the membrane. Asn-171 is a glycosylation site (N-linked (GlcNAc...) asparagine). The helical transmembrane segment at 181–201 (VFFPLEVFGFLLPMGIMGFCC) threads the bilayer. Over 202 to 231 (SRSIHILLGRRDHTQDWVQQKACIYSIAAS) the chain is Cytoplasmic. Residues 232 to 252 (LAVFVVSFLPVHLGFFLQFLV) traverse the membrane as a helical segment. Over 253–271 (RNSFIVECRAKQSISFFLQ) the chain is Extracellular. The helical transmembrane segment at 272–292 (LSMCFSNVNCCLDVFCYYFVI) threads the bilayer. Residues 293-319 (KEFRMNIRAHRPSRVQLVLQDTTISRG) lie on the Cytoplasmic side of the membrane.

Belongs to the G-protein coupled receptor 1 family. In terms of tissue distribution, expressed in the caudate nucleus and putamen, but not detected in the hippocampus, thalamus, pons cerebellum, frontal cortex of the brain or in the liver. Expressed in osteoclasts and osteoblasts. Higly expressed in macrophages and B-cells.

It is found in the cell membrane. In terms of biological role, G-protein coupled receptor that binds to several ligands including 2-arachidonoyl lysophosphatidylinositol or lysophosphatidylglucoside with high affinity, leading to rapid and transient activation of numerous intracellular signaling pathways. Induces the Ca(2+) release from intracellular stores via ERK, the heterotrimeric G protein GNA13 and RHOA leading to morphological changes including cell rounding and stress fiber formation. In macrophages, acts downstream of lysophosphatidylglucoside to inhibit the translocation of the phospholipid-transporting ABCA1 to plasma membrane and subsequent cholesterol efflux leading to lipid accumulation and foam cell formation. The polypeptide is G-protein coupled receptor 55 (GPR55) (Homo sapiens (Human)).